The following is a 124-amino-acid chain: Large ribosomal subunit protein bL12 (124 aa).

It belongs to the bacterial ribosomal protein bL12 family. As to quaternary structure, homodimer. Part of the ribosomal stalk of the 50S ribosomal subunit. Forms a multimeric L10(L12)X complex, where L10 forms an elongated spine to which 2 to 4 L12 dimers bind in a sequential fashion. Binds GTP-bound translation factors.

In terms of biological role, forms part of the ribosomal stalk which helps the ribosome interact with GTP-bound translation factors. Is thus essential for accurate translation. This chain is Large ribosomal subunit protein bL12, found in Ralstonia pickettii (strain 12J).